The primary structure comprises 758 residues: Long-chain-alcohol oxidase FAO1 (758 aa).

The next 2 membrane-spanning stretches (helical) occupy residues 102–122 (IVLR…LVCL) and 155–175 (PLAR…YFTW). Residue 246-261 (CDAVVVGSGCGGGVAA) participates in FAD binding. His-689 (proton acceptor) is an active-site residue.

The protein belongs to the GMC oxidoreductase family.

The protein resides in the membrane. It catalyses the reaction a long-chain primary fatty alcohol + O2 = a long-chain fatty aldehyde + H2O2. Long-chain fatty alcohol oxidase involved in the omega-oxidation pathway of lipid degradation. In Arabidopsis thaliana (Mouse-ear cress), this protein is Long-chain-alcohol oxidase FAO1 (FAO1).